The sequence spans 42 residues: Delta-hexatoxin-Ar1a (42 aa).

Cystine bridges form between C1-C15, C8-C20, C14-C31, and C16-C42.

The protein belongs to the neurotoxin 06 (delta-actx) family. Expressed by the venom gland.

The protein resides in the secreted. Its function is as follows. Inhibits tetrodotoxin-sensitive voltage-gated sodium channels (Nav) by binding to site 3. It slows the inactivation, causes a prolongation of action potential duration resulting in repetitive firing in autonomic and motor nerve fibers. Does not depolarize the resting potential. Does not affect tetrodotoxin-resistant sodium channels. This lethal neurotoxin is active on both insect and mammalian voltage-gated sodium channels. The protein is Delta-hexatoxin-Ar1a of Atrax robustus (Sydney funnel-web spider).